The primary structure comprises 477 residues: Asparaginyl-tRNA synthetase (477 aa).

The transit peptide at 1–14 (MLGARRLLGALRLC) directs the protein to the mitochondrion. At Lys353 the chain carries N6-acetyllysine.

The protein belongs to the class-II aminoacyl-tRNA synthetase family. As to quaternary structure, homodimer. As to expression, expressed in brain and inner ear, including the cochlear epithelium and organ of Corti.

It is found in the mitochondrion matrix. It localises to the mitochondrion. The enzyme catalyses tRNA(Asn) + L-asparagine + ATP = L-asparaginyl-tRNA(Asn) + AMP + diphosphate + H(+). Mitochondrial aminoacyl-tRNA synthetase that catalyzes the specific attachment of the asparagine amino acid (aa) to the homologous transfer RNA (tRNA), further participating in protein synthesis. The reaction occurs in a two steps: asparagine is first activated by ATP to form Asn-AMP and then transferred to the acceptor end of tRNA(Asn). The polypeptide is Asparaginyl-tRNA synthetase (Mus musculus (Mouse)).